Reading from the N-terminus, the 156-residue chain is Endoribonuclease YbeY (156 aa).

Zn(2+) is bound by residues histidine 115, histidine 119, and histidine 125.

This sequence belongs to the endoribonuclease YbeY family. It depends on Zn(2+) as a cofactor.

The protein resides in the cytoplasm. In terms of biological role, single strand-specific metallo-endoribonuclease involved in late-stage 70S ribosome quality control and in maturation of the 3' terminus of the 16S rRNA. The sequence is that of Endoribonuclease YbeY from Actinobacillus succinogenes (strain ATCC 55618 / DSM 22257 / CCUG 43843 / 130Z).